We begin with the raw amino-acid sequence, 423 residues long: Pre-mRNA polyadenylation factor fip-1 (423 aa).

Acidic residues predominate over residues 1 to 11; sequence MDIDEDEDFYA. Disordered regions lie at residues 1 to 178, 278 to 307, and 360 to 423; these read MDID…PVRT, GPGG…GGPG, and PGGG…GRRW. Low complexity predominate over residues 19-61; the sequence is PPTTAATTTTPATTTTTAAPTTTTTTTSTTTASAPPTTTSSST. Acidic residues predominate over residues 65-90; the sequence is DELEEGEEEDEGGGAMDEDDDSDIDI. Low complexity predominate over residues 135-146; it reads GTNSNSNSSSNK. The segment covering 360–415 has biased composition (gly residues); sequence PGGGPGGPGTGGMGPGGPGGQGGQGQQFGGGFGGNQGQGGYGGYDQMGGAGGGGRG.

This sequence belongs to the FIP1 family.

The protein localises to the nucleus. Pre-mRNA polyadenylation factor that directly interacts with poly(A) polymerase. The sequence is that of Pre-mRNA polyadenylation factor fip-1 (fip-1) from Neurospora crassa (strain ATCC 24698 / 74-OR23-1A / CBS 708.71 / DSM 1257 / FGSC 987).